Reading from the N-terminus, the 178-residue chain is Imidazoleglycerol-phosphate dehydratase (178 aa).

The protein belongs to the imidazoleglycerol-phosphate dehydratase family.

The protein localises to the cytoplasm. The catalysed reaction is D-erythro-1-(imidazol-4-yl)glycerol 3-phosphate = 3-(imidazol-4-yl)-2-oxopropyl phosphate + H2O. Its pathway is amino-acid biosynthesis; L-histidine biosynthesis; L-histidine from 5-phospho-alpha-D-ribose 1-diphosphate: step 6/9. In Archaeoglobus fulgidus (strain ATCC 49558 / DSM 4304 / JCM 9628 / NBRC 100126 / VC-16), this protein is Imidazoleglycerol-phosphate dehydratase.